We begin with the raw amino-acid sequence, 527 residues long: Bifunctional purine biosynthesis protein PurH (527 aa).

An MGS-like domain is found at 8–156 (AGAKRPIRRA…KNHPSVAVVV (149 aa)).

This sequence belongs to the PurH family.

The enzyme catalyses (6R)-10-formyltetrahydrofolate + 5-amino-1-(5-phospho-beta-D-ribosyl)imidazole-4-carboxamide = 5-formamido-1-(5-phospho-D-ribosyl)imidazole-4-carboxamide + (6S)-5,6,7,8-tetrahydrofolate. It catalyses the reaction IMP + H2O = 5-formamido-1-(5-phospho-D-ribosyl)imidazole-4-carboxamide. The protein operates within purine metabolism; IMP biosynthesis via de novo pathway; 5-formamido-1-(5-phospho-D-ribosyl)imidazole-4-carboxamide from 5-amino-1-(5-phospho-D-ribosyl)imidazole-4-carboxamide (10-formyl THF route): step 1/1. It functions in the pathway purine metabolism; IMP biosynthesis via de novo pathway; IMP from 5-formamido-1-(5-phospho-D-ribosyl)imidazole-4-carboxamide: step 1/1. The polypeptide is Bifunctional purine biosynthesis protein PurH (Mycobacterium sp. (strain KMS)).